The chain runs to 241 residues: MSNFAVSLPEVIAVLPAAGIGSRMLADCPKQYLTVGGKTIIEHAIFSLLHHPRIQRVIVVIHPQDTQFSRLSVAQDPRISTVYGGDQRANSVMAGLQLAGQAEWVLVHDAARPCLHLDDLSRLLSITECSQVGGILAAPVRDTMKRAEPGIQAIAHTVDRQDLWHALTPQLFPLELLKLCLSRALREGVAVTDEASALEYCGYHPILVTGRSDNIKVTRPEDLALAEFYLTQRQSLNNDSL.

Belongs to the IspD/TarI cytidylyltransferase family. IspD subfamily. In terms of assembly, homodimer.

It carries out the reaction 2-C-methyl-D-erythritol 4-phosphate + CTP + H(+) = 4-CDP-2-C-methyl-D-erythritol + diphosphate. The protein operates within isoprenoid biosynthesis; isopentenyl diphosphate biosynthesis via DXP pathway; isopentenyl diphosphate from 1-deoxy-D-xylulose 5-phosphate: step 2/6. In terms of biological role, catalyzes the formation of 4-diphosphocytidyl-2-C-methyl-D-erythritol from CTP and 2-C-methyl-D-erythritol 4-phosphate (MEP). The protein is 2-C-methyl-D-erythritol 4-phosphate cytidylyltransferase of Yersinia pseudotuberculosis serotype I (strain IP32953).